The sequence spans 605 residues: Probable potassium transport system protein Kup 3 (605 aa).

12 helical membrane passes run 16-36 (ALGL…TVIF), 49-69 (ILSL…AWLA), 97-117 (VAFA…DAVI), 138-158 (GLST…LFSV), 170-190 (FGPI…VSAF), 212-232 (GLAG…GEAL), 247-267 (AWHF…VFAI), 287-307 (LYIP…QAII), 339-359 (IYLG…MLVF), 368-388 (AYGM…IIVF), 397-417 (ALVA…TFSK), and 418-438 (LPHG…TIII).

This sequence belongs to the HAK/KUP transporter (TC 2.A.72) family.

The protein resides in the cell inner membrane. The enzyme catalyses K(+)(in) + H(+)(in) = K(+)(out) + H(+)(out). Its function is as follows. Transport of potassium into the cell. Likely operates as a K(+):H(+) symporter. The chain is Probable potassium transport system protein Kup 3 from Geobacter sulfurreducens (strain ATCC 51573 / DSM 12127 / PCA).